The following is a 262-amino-acid chain: Serine/arginine-rich SC35-like splicing factor SCL30 (262 aa).

Residues 1–14 (MRRYSPPYYSPPRR) are compositionally biased toward low complexity. Disordered regions lie at residues 1–48 (MRRY…SHGS) and 123–262 (ASES…VSPR). Phosphoserine occurs at positions 5, 10, and 22. Residues 31–42 (GYGGGGGGGGRR) are compositionally biased toward gly residues. The RRM domain maps to 47–125 (GSLLVRNIPL…REITVVVASE (79 aa)). The segment covering 125-152 (ESRKRPEEMRVKTRTRSREPSGSRDRSH) has biased composition (basic and acidic residues). The span at 153–167 (GRSRSRSISRSRSPR) shows a compositional bias: basic residues. 3 positions are modified to phosphoserine: Ser-182, Ser-204, and Ser-206. Tyr-209 carries the phosphotyrosine modification. Basic and acidic residues predominate over residues 217–239 (PDRDRNGDNEIREKPGYEAEDRR). Over residues 243-262 (RAVSRSPSGSRSRSVEVSPR) the composition is skewed to low complexity. Ser-254, Ser-256, and Ser-260 each carry phosphoserine.

The protein belongs to the splicing factor SR family. SCL subfamily. Component of the spliceosome. Interacts with RS2Z33, CYP59, CYP63 and CYP95. Post-translationally, phosphorylated.

The protein localises to the nucleus speckle. Functionally, involved in intron recognition and spliceosome assembly. Probably active at the 5' splice sites. In Arabidopsis thaliana (Mouse-ear cress), this protein is Serine/arginine-rich SC35-like splicing factor SCL30 (SCL30).